The sequence spans 512 residues: Ferrochelatase-2, chloroplastic (512 aa).

The disordered stretch occupies residues 1–32; the sequence is MNCPAMTASPSSSSSSSYSTFRPPPPLLPQLS. The N-terminal 83 residues, 1–83, are a transit peptide targeting the chloroplast; it reads MNCPAMTASP…SNPLNISSSS (83 aa). A compositionally biased stretch (low complexity) spans 9-21; the sequence is SPSSSSSSSYSTF. Position 84 is an N-acetylvaline (Val84).

It belongs to the ferrochelatase family. In terms of tissue distribution, expressed in leaves and flowers.

It localises to the plastid. The protein resides in the chloroplast membrane. It is found in the chloroplast thylakoid membrane. It carries out the reaction heme b + 2 H(+) = protoporphyrin IX + Fe(2+). Its pathway is porphyrin-containing compound metabolism; protoheme biosynthesis; protoheme from protoporphyrin-IX: step 1/1. In terms of biological role, catalyzes the last step of heme biosynthesis by inserting ferrous iron into protoporphyrin IX to produce protoheme. Produces heme for photosynthetic cytochromes, and for proteins involved in abiotic and biotic stress responses. May play a role in the quality control of individual chloroplasts during photo-oxidative stress through regulation of heme biosynthesis. This chain is Ferrochelatase-2, chloroplastic, found in Arabidopsis thaliana (Mouse-ear cress).